A 303-amino-acid polypeptide reads, in one-letter code: Ribosomal protein L11 methyltransferase (303 aa).

S-adenosyl-L-methionine contacts are provided by T144, G165, D187, and N235.

Belongs to the methyltransferase superfamily. PrmA family.

The protein resides in the cytoplasm. The catalysed reaction is L-lysyl-[protein] + 3 S-adenosyl-L-methionine = N(6),N(6),N(6)-trimethyl-L-lysyl-[protein] + 3 S-adenosyl-L-homocysteine + 3 H(+). In terms of biological role, methylates ribosomal protein L11. This chain is Ribosomal protein L11 methyltransferase, found in Prochlorococcus marinus (strain MIT 9312).